Consider the following 172-residue polypeptide: Lipoprotein signal peptidase (172 aa).

A run of 4 helical transmembrane segments spans residues 4-24 (LSSS…LDQV), 39-59 (VAIL…AFSF), 69-89 (WFFT…LAKL), and 93-113 (WTLE…NVID). Residues D122 and D140 contribute to the active site. A helical transmembrane segment spans residues 136-156 (FNVADMGISIGAVLLIISEFW).

The protein belongs to the peptidase A8 family.

Its subcellular location is the cell inner membrane. The enzyme catalyses Release of signal peptides from bacterial membrane prolipoproteins. Hydrolyzes -Xaa-Yaa-Zaa-|-(S,diacylglyceryl)Cys-, in which Xaa is hydrophobic (preferably Leu), and Yaa (Ala or Ser) and Zaa (Gly or Ala) have small, neutral side chains.. It participates in protein modification; lipoprotein biosynthesis (signal peptide cleavage). Functionally, this protein specifically catalyzes the removal of signal peptides from prolipoproteins. This is Lipoprotein signal peptidase from Hydrogenovibrio crunogenus (strain DSM 25203 / XCL-2) (Thiomicrospira crunogena).